Reading from the N-terminus, the 270-residue chain is MPELPEVEVSRLGISPHLIGQHIEQIIVRHKQLRWWVPDDVHLAEGHKVNDVRRRAKYLFIDTDAGSIILHLGMSGKLRIVNSETPVIKHDHIDIVLTNGVCLRFNDARRFGACLWQRVGDPEIGMIAALGPEPLTSDFDGQRLYDLSRTKNVPVKNFIMDNKVVVGVGNIYANESLFIAGIDPRKAAKKVSKKSYLALGDIIKQVLAKAIEQGGTTLKDFTQADGNPGYFAQHLRVYGRKGQACEVCESEIQSVTLGQRNTFFCEQCQK.

Pro2 acts as the Schiff-base intermediate with DNA in catalysis. Glu3 serves as the catalytic Proton donor. The Proton donor; for beta-elimination activity role is filled by Lys57. DNA is bound by residues His90, Arg109, and Lys151. An FPG-type zinc finger spans residues 236–270; that stretch reads RVYGRKGQACEVCESEIQSVTLGQRNTFFCEQCQK. Arg260 serves as the catalytic Proton donor; for delta-elimination activity.

It belongs to the FPG family. In terms of assembly, monomer. The cofactor is Zn(2+).

The enzyme catalyses Hydrolysis of DNA containing ring-opened 7-methylguanine residues, releasing 2,6-diamino-4-hydroxy-5-(N-methyl)formamidopyrimidine.. It carries out the reaction 2'-deoxyribonucleotide-(2'-deoxyribose 5'-phosphate)-2'-deoxyribonucleotide-DNA = a 3'-end 2'-deoxyribonucleotide-(2,3-dehydro-2,3-deoxyribose 5'-phosphate)-DNA + a 5'-end 5'-phospho-2'-deoxyribonucleoside-DNA + H(+). Its function is as follows. Involved in base excision repair of DNA damaged by oxidation or by mutagenic agents. Acts as a DNA glycosylase that recognizes and removes damaged bases. Has a preference for oxidized purines, such as 7,8-dihydro-8-oxoguanine (8-oxoG). Has AP (apurinic/apyrimidinic) lyase activity and introduces nicks in the DNA strand. Cleaves the DNA backbone by beta-delta elimination to generate a single-strand break at the site of the removed base with both 3'- and 5'-phosphates. The sequence is that of Formamidopyrimidine-DNA glycosylase from Pseudoalteromonas atlantica (strain T6c / ATCC BAA-1087).